A 284-amino-acid chain; its full sequence is Probable tRNA-splicing endonuclease subunit sen34 (284 aa).

Residues tyrosine 206, histidine 214, and lysine 245 contribute to the active site.

The protein belongs to the tRNA-intron endonuclease family. Heterotetramer composed of sen2, sen15, sen34 and sen54. Interacts directly with sen15.

It carries out the reaction pretRNA = a 3'-half-tRNA molecule with a 5'-OH end + a 5'-half-tRNA molecule with a 2',3'-cyclic phosphate end + an intron with a 2',3'-cyclic phosphate and a 5'-hydroxyl terminus.. Functionally, constitutes one of the two catalytic subunit of the tRNA-splicing endonuclease complex, a complex responsible for identification and cleavage of the splice sites in pre-tRNA. It cleaves pre-tRNA at the 5'- and 3'-splice sites to release the intron. The products are an intron and two tRNA half-molecules bearing 2',3'-cyclic phosphate and 5'-OH termini. There are no conserved sequences at the splice sites, but the intron is invariably located at the same site in the gene, placing the splice sites an invariant distance from the constant structural features of the tRNA body. It probably carries the active site for 3'-splice site cleavage. This is Probable tRNA-splicing endonuclease subunit sen34 (sen34) from Schizosaccharomyces pombe (strain 972 / ATCC 24843) (Fission yeast).